The following is a 37-amino-acid chain: MKIRASVRKICEKCRLIRRRGRIIVICPNPRHKQRQG.

The protein belongs to the bacterial ribosomal protein bL36 family.

Its subcellular location is the plastid. The protein localises to the chloroplast. The sequence is that of Large ribosomal subunit protein bL36c from Vitis vinifera (Grape).